Reading from the N-terminus, the 85-residue chain is ATP synthase subunit c (85 aa).

The next 2 membrane-spanning stretches (helical) occupy residues 10-30 and 53-73; these read IAVAIMIGLAALGTGIGFAIL and FIVAGLLDAISMIAVGVALFF.

Belongs to the ATPase C chain family. F-type ATPases have 2 components, F(1) - the catalytic core - and F(0) - the membrane proton channel. F(1) has five subunits: alpha(3), beta(3), gamma(1), delta(1), epsilon(1). F(0) has three main subunits: a(1), b(2) and c(10-14). The alpha and beta chains form an alternating ring which encloses part of the gamma chain. F(1) is attached to F(0) by a central stalk formed by the gamma and epsilon chains, while a peripheral stalk is formed by the delta and b chains.

Its subcellular location is the cell inner membrane. Functionally, f(1)F(0) ATP synthase produces ATP from ADP in the presence of a proton or sodium gradient. F-type ATPases consist of two structural domains, F(1) containing the extramembraneous catalytic core and F(0) containing the membrane proton channel, linked together by a central stalk and a peripheral stalk. During catalysis, ATP synthesis in the catalytic domain of F(1) is coupled via a rotary mechanism of the central stalk subunits to proton translocation. Key component of the F(0) channel; it plays a direct role in translocation across the membrane. A homomeric c-ring of between 10-14 subunits forms the central stalk rotor element with the F(1) delta and epsilon subunits. The protein is ATP synthase subunit c of Shewanella halifaxensis (strain HAW-EB4).